A 233-amino-acid chain; its full sequence is Tapetum-specific methyltransferase 1 (233 aa).

Lys8 is a binding site for substrate. Residues Val52, Glu74, 76 to 77 (GV), Ser82, Asp100, and Ala129 contribute to the S-adenosyl-L-methionine site. Substrate is bound at residue Asp150. An a divalent metal cation-binding site is contributed by Asp150. Asp152 contributes to the S-adenosyl-L-methionine binding site. The a divalent metal cation site is built by Asp176 and Asn177.

It belongs to the class I-like SAM-binding methyltransferase superfamily. Cation-dependent O-methyltransferase family. CCoAMT subfamily. The cofactor is a divalent metal cation. As to expression, expressed in inflorescences and flower buds. Not detected in roots, leaves or stems. Located exclusively in the tapetum of developing stamen.

It participates in aromatic compound metabolism; phenylpropanoid biosynthesis. In terms of biological role, methyltransferase involved in phenylpropanoid polyamine conjugate biosynthesis. In vivo, methylates only one of the 5-hydroxyferuloyl moieties of N1,N5,N10-tri-(hydroxyferuloyl)-spermidine, while is able in vitro to convert all three 5-hydroxyferuloyl residues to the corresponding sinapoyl moieties and to methylate caffeoyl CoA and tricaffeoyl spermidine. This Arabidopsis thaliana (Mouse-ear cress) protein is Tapetum-specific methyltransferase 1 (TSM1).